Reading from the N-terminus, the 327-residue chain is Biotin synthase (327 aa).

Residues 52-279 (NAIQRSTLLS…TSWVRLSAGR (228 aa)) form the Radical SAM core domain. The [4Fe-4S] cluster site is built by Cys67, Cys71, and Cys74. Positions 111, 142, 202, and 274 each coordinate [2Fe-2S] cluster.

It belongs to the radical SAM superfamily. Biotin synthase family. Homodimer. The cofactor is [4Fe-4S] cluster. It depends on [2Fe-2S] cluster as a cofactor.

It catalyses the reaction (4R,5S)-dethiobiotin + (sulfur carrier)-SH + 2 reduced [2Fe-2S]-[ferredoxin] + 2 S-adenosyl-L-methionine = (sulfur carrier)-H + biotin + 2 5'-deoxyadenosine + 2 L-methionine + 2 oxidized [2Fe-2S]-[ferredoxin]. It functions in the pathway cofactor biosynthesis; biotin biosynthesis; biotin from 7,8-diaminononanoate: step 2/2. In terms of biological role, catalyzes the conversion of dethiobiotin (DTB) to biotin by the insertion of a sulfur atom into dethiobiotin via a radical-based mechanism. This Dechloromonas aromatica (strain RCB) protein is Biotin synthase.